A 309-amino-acid polypeptide reads, in one-letter code: Homoserine kinase (309 aa).

91 to 101 (PIGSGLGSSAC) is a binding site for ATP.

Belongs to the GHMP kinase family. Homoserine kinase subfamily.

The protein localises to the cytoplasm. The enzyme catalyses L-homoserine + ATP = O-phospho-L-homoserine + ADP + H(+). It participates in amino-acid biosynthesis; L-threonine biosynthesis; L-threonine from L-aspartate: step 4/5. Catalyzes the ATP-dependent phosphorylation of L-homoserine to L-homoserine phosphate. This chain is Homoserine kinase, found in Buchnera aphidicola subsp. Schizaphis graminum (strain Sg).